A 136-amino-acid polypeptide reads, in one-letter code: Nucleoside diphosphate kinase (136 aa).

ATP-binding residues include K9, F57, R85, T91, R102, and N112. H115 functions as the Pros-phosphohistidine intermediate in the catalytic mechanism.

It belongs to the NDK family. As to quaternary structure, homotetramer. Mg(2+) is required as a cofactor.

It is found in the cytoplasm. It catalyses the reaction a 2'-deoxyribonucleoside 5'-diphosphate + ATP = a 2'-deoxyribonucleoside 5'-triphosphate + ADP. It carries out the reaction a ribonucleoside 5'-diphosphate + ATP = a ribonucleoside 5'-triphosphate + ADP. Major role in the synthesis of nucleoside triphosphates other than ATP. The ATP gamma phosphate is transferred to the NDP beta phosphate via a ping-pong mechanism, using a phosphorylated active-site intermediate. The polypeptide is Nucleoside diphosphate kinase (Acetivibrio thermocellus (strain ATCC 27405 / DSM 1237 / JCM 9322 / NBRC 103400 / NCIMB 10682 / NRRL B-4536 / VPI 7372) (Clostridium thermocellum)).